The sequence spans 581 residues: Putative aluminum-activated malate transporter 3 (581 aa).

A run of 6 helical transmembrane segments spans residues 98-118 (MGLALTLTSILIFFKIPGLEL), 122-142 (YLWAILTVVVIFEFSIGATFS), 148-164 (GLGTLSAGGLALGMSWI), 167-187 (MTGNWADVFNAASIFVVAFFA), 201-218 (YGFRVFLLTYCYVIVSGY), and 231-251 (FLLIALGASVGLIVNTCIYPI).

It belongs to the aromatic acid exporter (TC 2.A.85) family.

The protein localises to the membrane. Functionally, malate transporter. The polypeptide is Putative aluminum-activated malate transporter 3 (ALMT3) (Arabidopsis thaliana (Mouse-ear cress)).